Here is a 503-residue protein sequence, read N- to C-terminus: Glycerol kinase (503 aa).

Residue threonine 14 participates in ADP binding. 3 residues coordinate ATP: threonine 14, threonine 15, and serine 16. Threonine 14 lines the sn-glycerol 3-phosphate pocket. Arginine 18 lines the ADP pocket. Arginine 84, glutamate 85, tyrosine 136, and aspartate 246 together coordinate sn-glycerol 3-phosphate. Arginine 84, glutamate 85, tyrosine 136, aspartate 246, and glutamine 247 together coordinate glycerol. Residues threonine 268 and glycine 311 each coordinate ADP. Residues threonine 268, glycine 311, glutamine 315, and glycine 412 each contribute to the ATP site. ADP contacts are provided by glycine 412 and asparagine 416.

This sequence belongs to the FGGY kinase family.

The catalysed reaction is glycerol + ATP = sn-glycerol 3-phosphate + ADP + H(+). Its pathway is polyol metabolism; glycerol degradation via glycerol kinase pathway; sn-glycerol 3-phosphate from glycerol: step 1/1. Inhibited by fructose 1,6-bisphosphate (FBP). Key enzyme in the regulation of glycerol uptake and metabolism. Catalyzes the phosphorylation of glycerol to yield sn-glycerol 3-phosphate. In Haemophilus influenzae (strain 86-028NP), this protein is Glycerol kinase.